Here is an 854-residue protein sequence, read N- to C-terminus: Protein asteroid (854 aa).

Positions S368 to L427 are disordered. The segment covering D375 to D387 has biased composition (basic and acidic residues). Over residues V388–L427 the composition is skewed to acidic residues.

This sequence belongs to the asteroid family. Expressed in the proliferative tissues of embryos and in the mitotically active tissue anterior to the morphogenetic furrow in eye imaginal disks.

Functionally, may function in EGF receptor signaling. May play a role in compound eye morphogenesis. The polypeptide is Protein asteroid (ast) (Drosophila melanogaster (Fruit fly)).